A 99-amino-acid chain; its full sequence is Mu-hexatoxin-Mg1c (99 aa).

3 disulfides stabilise this stretch: Cys-61/Cys-75, Cys-68/Cys-80, and Cys-74/Cys-94.

It belongs to the neurotoxin 14 (magi-1) family. 09 (magi-1) subfamily. In terms of tissue distribution, expressed by the venom gland.

It localises to the secreted. In terms of biological role, inhibits voltage-gated sodium channels by binding to site 3. Insecticidal neurotoxin. This Macrothele gigas (Japanese funnel web spider) protein is Mu-hexatoxin-Mg1c.